A 141-amino-acid chain; its full sequence is Lutropin subunit beta (141 aa).

The N-terminal stretch at 1 to 20 (MEMLQGLLLWLLLNVGGVWA) is a signal peptide. 6 disulfide bridges follow: C29-C77, C43-C92, C46-C130, C54-C108, C58-C110, and C113-C120. N33 is a glycosylation site (N-linked (GlcNAc...) asparagine).

Belongs to the glycoprotein hormones subunit beta family. Heterodimer of a common alpha chain and a unique beta chain which confers biological specificity to thyrotropin, lutropin, follitropin and gonadotropin.

Its subcellular location is the secreted. Functionally, promotes spermatogenesis and ovulation by stimulating the testes and ovaries to synthesize steroids. This chain is Lutropin subunit beta (LHB), found in Ailurus fulgens (Himalayan red panda).